A 208-amino-acid chain; its full sequence is Photosystem I reaction center subunit II-1, chloroplastic (208 aa).

The N-terminal 45 residues, 1–45, are a transit peptide targeting the chloroplast; the sequence is MATQAAGIFNSAITTAATSGVKKLHFFSTTHRPKSLSFTKTAIRA. Thr-48 carries the post-translational modification Phosphothreonine. The tract at residues 49-72 is disordered; sequence DSSAAAAAAPATKEAPVGFTPPQL. Residues 50–64 are compositionally biased toward low complexity; sequence SSAAAAAAPATKEAP. A ferredoxin and ferredoxin-oxidoreductase binding region spans residues 141-149; the sequence is RLRSKYKIT.

It belongs to the PsaD family. As to quaternary structure, interacts with PGRL1A and PGRL1B. In terms of processing, phosphorylated by a threonine specific thylakoid kinase in a light activated and redox-dependent manner.

Its subcellular location is the plastid. The protein resides in the chloroplast thylakoid membrane. In terms of biological role, psaD can form complexes with ferredoxin and ferredoxin-oxidoreductase in photosystem I (PS I) reaction center. PSAD may encode the ferredoxin-docking protein. The sequence is that of Photosystem I reaction center subunit II-1, chloroplastic (psaD1) from Arabidopsis thaliana (Mouse-ear cress).